We begin with the raw amino-acid sequence, 217 residues long: Ribosomal RNA small subunit methyltransferase G (217 aa).

S-adenosyl-L-methionine is bound by residues G78, F83, 129–130 (AE), and R146.

Belongs to the methyltransferase superfamily. RNA methyltransferase RsmG family.

It is found in the cytoplasm. The enzyme catalyses guanosine(527) in 16S rRNA + S-adenosyl-L-methionine = N(7)-methylguanosine(527) in 16S rRNA + S-adenosyl-L-homocysteine. In terms of biological role, specifically methylates the N7 position of guanine in position 527 of 16S rRNA. This is Ribosomal RNA small subunit methyltransferase G from Geobacter sp. (strain M21).